The chain runs to 439 residues: MEVIMNSSIVKLPNKYELVKDTLVLILAGGRGSRLYELTDKRAKPALYFGGNRRIIDFALSNCLNSGLNRIGVVTQYAAHSLLRHLQNGWSFLPAERGEFIDMLPARQQIDDSTWYRGTADAVYQNMAIIRDHYCPKYILILAGDHIYKQDYSQMLLDHIHSGAKCTVGCIEVEREKATEFGVMAVNENLKVKSFVEKPKDPPAMVGKPNTSLASMGIYVFDADYLYDVLEREVSSPYTSHDFGKDILPKALEEGVLYAHPFSRSCMGRNTEGEIYWRDVGTLDSFWQSNIDLVCENPQLDIYDQSWPIRGNPVQTYPSKFFYKKENARPVDNSLISGGCVITDASISYSVLFDRIKINEGSQIDHCVVLPQVTIGKNCKLKRCIIDRHSVIPDGMEIGVDLELDRQRFRVSSGGVVLVTPSMLKKLNGEEVASEAHLD.

Residues Tyr116, Gly182, 197-198, and Ser215 contribute to the alpha-D-glucose 1-phosphate site; that span reads EK.

It belongs to the bacterial/plant glucose-1-phosphate adenylyltransferase family. Homotetramer.

It carries out the reaction alpha-D-glucose 1-phosphate + ATP + H(+) = ADP-alpha-D-glucose + diphosphate. It participates in glycan biosynthesis; glycogen biosynthesis. Involved in the biosynthesis of ADP-glucose, a building block required for the elongation reactions to produce glycogen. Catalyzes the reaction between ATP and alpha-D-glucose 1-phosphate (G1P) to produce pyrophosphate and ADP-Glc. The sequence is that of Glucose-1-phosphate adenylyltransferase from Pasteurella multocida (strain Pm70).